The chain runs to 838 residues: 1,4-alpha-glucan branching enzyme GlgB 1 (838 aa).

The span at 1–11 (MIPRPPSDDRA) shows a compositional bias: basic and acidic residues. 2 disordered regions span residues 1-98 (MIPR…VSKK) and 116-142 (PVSP…SVLG). A compositionally biased stretch (low complexity) spans 29 to 57 (KKAAAAKKTAGKKATPAAKATAAKGAVTK). The active-site Nucleophile is the aspartate 513. Glutamate 566 acts as the Proton donor in catalysis. The segment at 793–822 (TDGARYGGSDVTNPHPVKPEPQGRHGRPAS) is disordered.

This sequence belongs to the glycosyl hydrolase 13 family. GlgB subfamily. As to quaternary structure, monomer.

It catalyses the reaction Transfers a segment of a (1-&gt;4)-alpha-D-glucan chain to a primary hydroxy group in a similar glucan chain.. It participates in glycan biosynthesis; glycogen biosynthesis. In terms of biological role, catalyzes the formation of the alpha-1,6-glucosidic linkages in glycogen by scission of a 1,4-alpha-linked oligosaccharide from growing alpha-1,4-glucan chains and the subsequent attachment of the oligosaccharide to the alpha-1,6 position. This chain is 1,4-alpha-glucan branching enzyme GlgB 1, found in Streptomyces avermitilis (strain ATCC 31267 / DSM 46492 / JCM 5070 / NBRC 14893 / NCIMB 12804 / NRRL 8165 / MA-4680).